The primary structure comprises 243 residues: Small ribosomal subunit protein eS4 (243 aa).

Residues 43–105 (IPLLYIVRDY…TGEHYRVLPN (63 aa)) form the S4 RNA-binding domain.

The protein belongs to the eukaryotic ribosomal protein eS4 family. In terms of assembly, part of the 30S ribosomal subunit.

The chain is Small ribosomal subunit protein eS4 from Pyrococcus furiosus (strain ATCC 43587 / DSM 3638 / JCM 8422 / Vc1).